The chain runs to 436 residues: Methylenetetrahydrofolate--tRNA-(uracil-5-)-methyltransferase TrmFO (436 aa).

8–13 (GGGLAG) is an FAD binding site.

Belongs to the MnmG family. TrmFO subfamily. It depends on FAD as a cofactor.

The protein localises to the cytoplasm. It catalyses the reaction uridine(54) in tRNA + (6R)-5,10-methylene-5,6,7,8-tetrahydrofolate + NADH + H(+) = 5-methyluridine(54) in tRNA + (6S)-5,6,7,8-tetrahydrofolate + NAD(+). It carries out the reaction uridine(54) in tRNA + (6R)-5,10-methylene-5,6,7,8-tetrahydrofolate + NADPH + H(+) = 5-methyluridine(54) in tRNA + (6S)-5,6,7,8-tetrahydrofolate + NADP(+). In terms of biological role, catalyzes the folate-dependent formation of 5-methyl-uridine at position 54 (M-5-U54) in all tRNAs. The protein is Methylenetetrahydrofolate--tRNA-(uracil-5-)-methyltransferase TrmFO of Syntrophomonas wolfei subsp. wolfei (strain DSM 2245B / Goettingen).